A 176-amino-acid polypeptide reads, in one-letter code: Ribosome maturation factor RimM (176 aa).

The PRC barrel domain occupies Glu-104–Ile-176.

The protein belongs to the RimM family. In terms of assembly, binds ribosomal protein uS19.

Its subcellular location is the cytoplasm. Functionally, an accessory protein needed during the final step in the assembly of 30S ribosomal subunit, possibly for assembly of the head region. Essential for efficient processing of 16S rRNA. May be needed both before and after RbfA during the maturation of 16S rRNA. It has affinity for free ribosomal 30S subunits but not for 70S ribosomes. In Thermotoga maritima (strain ATCC 43589 / DSM 3109 / JCM 10099 / NBRC 100826 / MSB8), this protein is Ribosome maturation factor RimM.